The chain runs to 187 residues: UPF0301 protein YqgE (187 aa).

This sequence belongs to the UPF0301 (AlgH) family.

In Salmonella heidelberg (strain SL476), this protein is UPF0301 protein YqgE.